A 160-amino-acid chain; its full sequence is DNA polymerase delta subunit 4 (160 aa).

A disordered region spans residues methionine 1 to valine 48. Positions alanine 8–isoleucine 17 are enriched in polar residues.

It belongs to the DNA polymerase delta subunit 4 family. As to quaternary structure, heterotetramer that consist of the pol3, cdc1, cdc27 and cdm1 subunits. Interacts with cdc1 and pol3.

It is found in the nucleus. In terms of biological role, appears to have a role in the stabilization of the DNA polymerase delta complex. The polypeptide is DNA polymerase delta subunit 4 (cdm1) (Schizosaccharomyces pombe (strain 972 / ATCC 24843) (Fission yeast)).